The following is a 357-amino-acid chain: Probable leucine aminopeptidase ARB_00576 (357 aa).

Residues 1 to 15 (MKVLAALALSALAMA) form the signal peptide. A glycan (N-linked (GlcNAc...) asparagine) is linked at asparagine 76. Zn(2+) contacts are provided by histidine 167 and aspartate 185. Residues 169 to 188 (DSINGNNPQGEAPGADDNGS) form a disordered region. An N-linked (GlcNAc...) asparagine glycan is attached at asparagine 186. The Zn(2+) site is built by glutamate 224 and aspartate 251. N-linked (GlcNAc...) asparagine glycosylation is present at asparagine 269. An intrachain disulfide couples cysteine 291 to cysteine 295. Histidine 324 contributes to the Zn(2+) binding site.

This sequence belongs to the peptidase M28 family. M28E subfamily. Monomer. Zn(2+) serves as cofactor.

Its subcellular location is the secreted. Functionally, probable extracellular aminopeptidase which contributes to pathogenicity. The protein is Probable leucine aminopeptidase ARB_00576 of Arthroderma benhamiae (strain ATCC MYA-4681 / CBS 112371) (Trichophyton mentagrophytes).